A 405-amino-acid polypeptide reads, in one-letter code: Envelope glycoprotein M (405 aa).

The Intravirion segment spans residues 1-17 (MKSSKNDTFVYRTWVKT). A helical membrane pass occupies residues 18–38 (LVVYFVMFVMSAVVPITAMFP). The Virion surface segment spans residues 39–76 (NLGYPCYFNALVDYGALNLTNYNLAHHLTPTLYLEPPE). A helical transmembrane segment spans residues 77–97 (MFVYITLVFIADCVAFIYYAC). Residues 98–121 (GEVALIKARKKVSGLTDLSAWVSA) lie on the Intravirion side of the membrane. A helical transmembrane segment spans residues 122-142 (VGSPTVLFLAILKLWSIQVFI). The Virion surface segment spans residues 143–149 (QVLSYKH). The helical transmembrane segment at 150 to 170 (VFLSAFVYFLHFLASVLHACA) threads the bilayer. Over 171 to 192 (CVTRFSPVWVVKAQDNSIPQDT) the chain is Intravirion. The helical transmembrane segment at 193 to 215 (FLWWVVFYLKPVVTNLYLGCLAL) threads the bilayer. The Virion surface portion of the chain corresponds to 216 to 245 (ETLVFSLSVFLALGNSFYFMVGDMVLGAVN). The helical transmembrane segment at 246–266 (LFLILPIFWYILTEVWLASFL) threads the bilayer. A topological domain (intravirion) is located at residue Arg-267. A helical membrane pass occupies residues 268–288 (HNFGFYCGMFIASIILILPLV). Topologically, residues 289 to 299 (RYEAVFVSAKL) are virion surface. Residues 300-320 (HTTVAINVAIIPILCSVAMLI) traverse the membrane as a helical segment. Residues 321 to 405 (RICRIFKSMR…TTDSEEEIFP (85 aa)) lie on the Intravirion side of the membrane. A disordered region spans residues 346 to 405 (LESEPRPRPSRTPSPGRNRRRSSTSSSSSRSTRRQRPVSTQALVSSVLPMTTDSEEEIFP). Polar residues predominate over residues 386-397 (QALVSSVLPMTT).

It belongs to the herpesviridae glycoprotein M family. In terms of assembly, interacts (via N-terminus) with gN (via N-terminus). The gM-gN heterodimer forms the gCII complex.

The protein localises to the virion membrane. It is found in the host Golgi apparatus. Its subcellular location is the host trans-Golgi network. It localises to the host endosome membrane. The protein resides in the host nucleus inner membrane. In terms of biological role, envelope glycoprotein important for virion assembly and egress. Plays a role in the correct incorporation of gH-gL into virion membrane. Directs the glycoprotein N (gN) to the host trans-Golgi network. The sequence is that of Envelope glycoprotein M from Epstein-Barr virus (strain B95-8) (HHV-4).